A 129-amino-acid chain; its full sequence is Small ribosomal subunit protein uS9 (129 aa).

Belongs to the universal ribosomal protein uS9 family.

In Gemmatimonas aurantiaca (strain DSM 14586 / JCM 11422 / NBRC 100505 / T-27), this protein is Small ribosomal subunit protein uS9.